The following is a 261-amino-acid chain: Small ribosomal subunit protein uS2 (261 aa).

The residue at position 2 (Ser2) is an N-acetylserine. Positions 214 to 261 are disordered; it reads ATEDIKTDDVEEAPAADAETEWTGETEEVDWAESGATPAAEEAAASNW. A compositionally biased stretch (acidic residues) spans 222-244; that stretch reads DVEEAPAADAETEWTGETEEVDW. The span at 245–261 shows a compositional bias: low complexity; it reads AESGATPAAEEAAASNW.

It belongs to the universal ribosomal protein uS2 family. As to quaternary structure, component of the small ribosomal subunit. Mature ribosomes consist of a small (40S) and a large (60S) subunit. The 40S subunit contains about 33 different proteins and 1 molecule of RNA (18S). The 60S subunit contains about 49 different proteins and 3 molecules of RNA (25S, 5.8S and 5S). Interacts with RPS21.

It localises to the cytoplasm. Required for the assembly and/or stability of the 40S ribosomal subunit. Required for the processing of the 20S rRNA-precursor to mature 18S rRNA in a late step of the maturation of 40S ribosomal subunits. This Debaryomyces hansenii (strain ATCC 36239 / CBS 767 / BCRC 21394 / JCM 1990 / NBRC 0083 / IGC 2968) (Yeast) protein is Small ribosomal subunit protein uS2.